We begin with the raw amino-acid sequence, 263 residues long: 3-methyl-2-oxobutanoate hydroxymethyltransferase (263 aa).

Mg(2+)-binding residues include D45 and D84. Residues 45 to 46 (DS), D84, and K112 contribute to the 3-methyl-2-oxobutanoate site. E114 contributes to the Mg(2+) binding site. E181 functions as the Proton acceptor in the catalytic mechanism.

Belongs to the PanB family. As to quaternary structure, homodecamer; pentamer of dimers. It depends on Mg(2+) as a cofactor.

The protein resides in the cytoplasm. It catalyses the reaction 3-methyl-2-oxobutanoate + (6R)-5,10-methylene-5,6,7,8-tetrahydrofolate + H2O = 2-dehydropantoate + (6S)-5,6,7,8-tetrahydrofolate. It functions in the pathway cofactor biosynthesis; (R)-pantothenate biosynthesis; (R)-pantoate from 3-methyl-2-oxobutanoate: step 1/2. Functionally, catalyzes the reversible reaction in which hydroxymethyl group from 5,10-methylenetetrahydrofolate is transferred onto alpha-ketoisovalerate to form ketopantoate. This is 3-methyl-2-oxobutanoate hydroxymethyltransferase from Buchnera aphidicola subsp. Acyrthosiphon pisum (strain APS) (Acyrthosiphon pisum symbiotic bacterium).